Here is a 568-residue protein sequence, read N- to C-terminus: uncharacterized protein (568 aa).

This is an uncharacterized protein from Rickettsia prowazekii (strain Madrid E).